The primary structure comprises 453 residues: Indoleamine 2,3-dioxygenase (453 aa).

Residue His331 participates in heme binding.

The protein belongs to the indoleamine 2,3-dioxygenase family. It depends on heme as a cofactor.

The catalysed reaction is D-tryptophan + O2 = N-formyl-D-kynurenine. It catalyses the reaction L-tryptophan + O2 = N-formyl-L-kynurenine. It functions in the pathway cofactor biosynthesis; NAD(+) biosynthesis. Functionally, catalyzes the first step in tryptophan catabolism in order to supply de novo nicotinamide adenine dinucleotide (NAD(+)) via the kynurenine pathway. Plays a role in the cellular response to telomere uncapping. The sequence is that of Indoleamine 2,3-dioxygenase (BNA2) from Saccharomyces cerevisiae (strain ATCC 204508 / S288c) (Baker's yeast).